The primary structure comprises 332 residues: Putative peptide import ATP-binding protein BruAb2_1033 (332 aa).

Residues 11 to 261 (LEVSNLSVDF…PLHPYTEGLL (251 aa)) form the ABC transporter domain. 47 to 54 (GESGSGKS) contacts ATP.

This sequence belongs to the ABC transporter superfamily. The complex is composed of two ATP-binding proteins (BruAb2_1033 and BruAb2_1034), two transmembrane proteins (BruAb2_1031 and BruAb2_1032) and a solute-binding protein (BruAb2_1030).

Its subcellular location is the cell inner membrane. Functionally, probably part of an ABC transporter complex that could be involved in peptide import. Probably responsible for energy coupling to the transport system. The polypeptide is Putative peptide import ATP-binding protein BruAb2_1033 (Brucella abortus biovar 1 (strain 9-941)).